The primary structure comprises 275 residues: 3-methyl-2-oxobutanoate hydroxymethyltransferase (275 aa).

Residues aspartate 49 and aspartate 88 each contribute to the Mg(2+) site. 3-methyl-2-oxobutanoate contacts are provided by residues 49–50, aspartate 88, and lysine 118; that span reads DS. Glutamate 120 contributes to the Mg(2+) binding site. The active-site Proton acceptor is glutamate 187.

It belongs to the PanB family. In terms of assembly, homodecamer; pentamer of dimers. The cofactor is Mg(2+).

It localises to the cytoplasm. The enzyme catalyses 3-methyl-2-oxobutanoate + (6R)-5,10-methylene-5,6,7,8-tetrahydrofolate + H2O = 2-dehydropantoate + (6S)-5,6,7,8-tetrahydrofolate. It functions in the pathway cofactor biosynthesis; (R)-pantothenate biosynthesis; (R)-pantoate from 3-methyl-2-oxobutanoate: step 1/2. In terms of biological role, catalyzes the reversible reaction in which hydroxymethyl group from 5,10-methylenetetrahydrofolate is transferred onto alpha-ketoisovalerate to form ketopantoate. The polypeptide is 3-methyl-2-oxobutanoate hydroxymethyltransferase (Brucella suis (strain ATCC 23445 / NCTC 10510)).